We begin with the raw amino-acid sequence, 496 residues long: Deoxyribodipyrimidine photo-lyase (496 aa).

The Photolyase/cryptochrome alpha/beta domain maps to 28–160 (GPVVYWMFRD…EVDAHNVVPM (133 aa)). FAD is bound by residues Y256, 269–273 (LSGLS), 307–315 (ELIVRRELS), and 415–417 (DGR). E307 serves as a coordination point for DNA.

This sequence belongs to the DNA photolyase class-2 family. FAD serves as cofactor. As to expression, highly expressed in flowers. Expressed in roots and stems.

Its subcellular location is the nucleus. The enzyme catalyses cyclobutadipyrimidine (in DNA) = 2 pyrimidine residues (in DNA).. In terms of biological role, involved in repair of UV radiation-induced DNA damage. Catalyzes the light-dependent monomerization (300-600 nm) of cyclobutylpyrimidine dimers (CPDs), which are formed between adjacent bases on the same DNA strand upon exposure to ultraviolet radiation. Required for plant survival in the presence of UV-B light. Not involved in the repair of (6-4) photoproducts. The chain is Deoxyribodipyrimidine photo-lyase (PHR1) from Arabidopsis thaliana (Mouse-ear cress).